We begin with the raw amino-acid sequence, 681 residues long: DNA ligase (681 aa).

NAD(+)-binding positions include 34-38, 83-84, and glutamate 112; these read DEEYD and SL. The N6-AMP-lysine intermediate role is filled by lysine 114. The NAD(+) site is built by arginine 135, glutamate 169, lysine 285, and lysine 309. 4 residues coordinate Zn(2+): cysteine 403, cysteine 406, cysteine 422, and cysteine 427. A BRCT domain is found at 584–673; it reads TTSNILDGLT…GVELKESWKK (90 aa).

This sequence belongs to the NAD-dependent DNA ligase family. LigA subfamily. The cofactor is Mg(2+). Mn(2+) serves as cofactor.

The enzyme catalyses NAD(+) + (deoxyribonucleotide)n-3'-hydroxyl + 5'-phospho-(deoxyribonucleotide)m = (deoxyribonucleotide)n+m + AMP + beta-nicotinamide D-nucleotide.. Functionally, DNA ligase that catalyzes the formation of phosphodiester linkages between 5'-phosphoryl and 3'-hydroxyl groups in double-stranded DNA using NAD as a coenzyme and as the energy source for the reaction. It is essential for DNA replication and repair of damaged DNA. The chain is DNA ligase from Fervidobacterium nodosum (strain ATCC 35602 / DSM 5306 / Rt17-B1).